A 439-amino-acid polypeptide reads, in one-letter code: Microfibrillar-associated protein 1 (439 aa).

Over residues 1–17 the composition is skewed to polar residues; that stretch reads MSVPSSLMKQPPIQSTA. Positions 1 to 200 are disordered; the sequence is MSVPSSLMKQ…SEDEMEPRLK (200 aa). Ser2 carries the N-acetylserine modification. Basic and acidic residues predominate over residues 23–34; it reads RNEKGEISMEKV. Residues Ser52 and Ser53 each carry the phosphoserine modification. Over residues 61–70 the composition is skewed to basic and acidic residues; it reads QFIKKAKEQE. A Glycyl lysine isopeptide (Lys-Gly) (interchain with G-Cter in SUMO2) cross-link involves residue Lys67. The span at 71–81 shows a compositional bias: acidic residues; that stretch reads AEPEEQEEDSS. Phosphoserine occurs at positions 94, 116, 118, 132, and 133. Composition is skewed to acidic residues over residues 112–122 and 131–144; these read VVGESDSEVEG and DSSE…DEEE. Residues 145 to 163 are compositionally biased toward basic and acidic residues; sequence IERRRGMMRQRAQERKNEE. Over residues 178 to 195 the composition is skewed to acidic residues; the sequence is ESESESEYEEYTDSEDEM. Residue Lys249 forms a Glycyl lysine isopeptide (Lys-Gly) (interchain with G-Cter in SUMO2) linkage. Thr267 carries the post-translational modification Phosphothreonine. Lys357 is covalently cross-linked (Glycyl lysine isopeptide (Lys-Gly) (interchain with G-Cter in SUMO2)). The residue at position 361 (Ser361) is a Phosphoserine. Residues Lys371, Lys381, Lys415, and Lys418 each participate in a glycyl lysine isopeptide (Lys-Gly) (interchain with G-Cter in SUMO2) cross-link. Ser432 carries the post-translational modification Phosphoserine.

The protein belongs to the MFAP1 family. In terms of assembly, component of the spliceosome B complex. Interacts with PRPF38A (via N-terminal interaction domain).

The protein localises to the nucleus. Its function is as follows. Involved in pre-mRNA splicing as a component of the spliceosome. The chain is Microfibrillar-associated protein 1 from Bos taurus (Bovine).